The chain runs to 630 residues: 1,4-alpha-glucan branching enzyme GlgB (630 aa).

Catalysis depends on Asp308, which acts as the Nucleophile. Catalysis depends on Glu361, which acts as the Proton donor.

Belongs to the glycosyl hydrolase 13 family. GlgB subfamily. As to quaternary structure, monomer.

It carries out the reaction Transfers a segment of a (1-&gt;4)-alpha-D-glucan chain to a primary hydroxy group in a similar glucan chain.. It functions in the pathway glycan biosynthesis; glycogen biosynthesis. Catalyzes the formation of the alpha-1,6-glucosidic linkages in glycogen by scission of a 1,4-alpha-linked oligosaccharide from growing alpha-1,4-glucan chains and the subsequent attachment of the oligosaccharide to the alpha-1,6 position. This is 1,4-alpha-glucan branching enzyme GlgB from Halothermothrix orenii (strain H 168 / OCM 544 / DSM 9562).